Reading from the N-terminus, the 31-residue chain is Cyclotide mden-J (31 aa).

A cross-link (cyclopeptide (Gly-Asn)) is located at residues 1-31 (GSIPCGESCVYIPCISSIVGCACKSKVCYKN). Disulfide bonds link cysteine 5/cysteine 21, cysteine 9/cysteine 23, and cysteine 14/cysteine 28.

This sequence belongs to the cyclotide family. Bracelet subfamily. This is a cyclic peptide.

Its function is as follows. Probably participates in a plant defense mechanism. This Melicytus dentatus (Tree violet) protein is Cyclotide mden-J.